A 116-amino-acid polypeptide reads, in one-letter code: Ribosome-binding factor A (116 aa).

Belongs to the RbfA family. In terms of assembly, monomer. Binds 30S ribosomal subunits, but not 50S ribosomal subunits or 70S ribosomes.

The protein resides in the cytoplasm. Its function is as follows. One of several proteins that assist in the late maturation steps of the functional core of the 30S ribosomal subunit. Associates with free 30S ribosomal subunits (but not with 30S subunits that are part of 70S ribosomes or polysomes). Required for efficient processing of 16S rRNA. May interact with the 5'-terminal helix region of 16S rRNA. In Ureaplasma urealyticum serovar 10 (strain ATCC 33699 / Western), this protein is Ribosome-binding factor A.